A 166-amino-acid chain; its full sequence is Sec-independent protein translocase protein TatB (166 aa).

A helical transmembrane segment spans residues 1–21 (MIDIAFSKLAIIGVAALVFIG). The tract at residues 85 to 146 (DSSLHSAWDE…SGQKSRVISG (62 aa)) is disordered.

The protein belongs to the TatB family. The Tat system comprises two distinct complexes: a TatABC complex, containing multiple copies of TatA, TatB and TatC subunits, and a separate TatA complex, containing only TatA subunits. Substrates initially bind to the TatABC complex, which probably triggers association of the separate TatA complex to form the active translocon.

It localises to the cell inner membrane. In terms of biological role, part of the twin-arginine translocation (Tat) system that transports large folded proteins containing a characteristic twin-arginine motif in their signal peptide across membranes. Together with TatC, TatB is part of a receptor directly interacting with Tat signal peptides. TatB may form an oligomeric binding site that transiently accommodates folded Tat precursor proteins before their translocation. This chain is Sec-independent protein translocase protein TatB, found in Herminiimonas arsenicoxydans.